The primary structure comprises 103 residues: Toxin BMLCL (103 aa).

The signal sequence occupies residues 1 to 21 (MKTLLLTLVVVTIICLDLGYT). 5 disulfide bridges follow: Cys-24–Cys-45, Cys-27–Cys-37, Cys-38–Cys-72, Cys-76–Cys-90, and Cys-91–Cys-96.

This sequence belongs to the three-finger toxin family. Ancestral subfamily. Orphan group XVII sub-subfamily. As to expression, expressed by the venom gland.

Its subcellular location is the secreted. Its function is as follows. Interacts with high efficiency with both neuronal alpha-7/CHRNA7 and muscle type nicotinic acetylcholine receptors (nAChRs). Tested on human alpha-7/CHRNA7 nAChR (IC(50)=42 nM), T.californica muscle receptor (IC(50)=31 nM), L.stagnalis and A.californica acetylcholine-binding proteins (IC(50)=333 nM and 3.4 uM, respectively). This is Toxin BMLCL from Bungarus multicinctus (Many-banded krait).